The sequence spans 290 residues: Acetylglutamate kinase (290 aa).

Substrate-binding positions include 64–65 (GG), Arg86, and Asn183.

The protein belongs to the acetylglutamate kinase family. ArgB subfamily.

It is found in the cytoplasm. The enzyme catalyses N-acetyl-L-glutamate + ATP = N-acetyl-L-glutamyl 5-phosphate + ADP. Its pathway is amino-acid biosynthesis; L-arginine biosynthesis; N(2)-acetyl-L-ornithine from L-glutamate: step 2/4. Catalyzes the ATP-dependent phosphorylation of N-acetyl-L-glutamate. The sequence is that of Acetylglutamate kinase from Halothermothrix orenii (strain H 168 / OCM 544 / DSM 9562).